The primary structure comprises 397 residues: P2X purinoceptor 3 (397 aa).

The Cytoplasmic segment spans residues 1–20 (MNCISDFFTYETTKSVVVKS). A helical transmembrane segment spans residues 21–43 (WTIGIINRVVQLLIISYFVGWVF). The Extracellular portion of the chain corresponds to 44–322 (LHEKAYQVRD…AGKFNIIPTI (279 aa)). ATP contacts are provided by Lys63 and Lys65. 3 cysteine pairs are disulfide-bonded: Cys107/Cys153, Cys116/Cys137, and Cys122/Cys147. Residue Glu111 coordinates Mg(2+). Asn139 is a glycosylation site (N-linked (GlcNAc...) asparagine). Asp158 serves as a coordination point for Mg(2+). Asp158 serves as a coordination point for Ca(2+). An N-linked (GlcNAc...) asparagine glycan is attached at Asn170. Residue Thr172 coordinates ATP. A glycan (N-linked (GlcNAc...) asparagine) is linked at Asn194. 2 cysteine pairs are disulfide-bonded: Cys203-Cys213 and Cys247-Cys256. ATP contacts are provided by Ser275, Asn279, and Arg281. N-linked (GlcNAc...) asparagine glycosylation occurs at Asn290. Lys299 lines the ATP pocket. A helical transmembrane segment spans residues 323-341 (ISSVAAFTSVGVGTVLCDI). Over 342 to 397 (ILLNFLKGADQYKAKKFEEVNETTLKIAALTNPVYPSDQTTAEKQSTDSGAFSIGH) the chain is Cytoplasmic. The span at 378–391 (SDQTTAEKQSTDSG) shows a compositional bias: polar residues. The segment at 378-397 (SDQTTAEKQSTDSGAFSIGH) is disordered.

Belongs to the P2X receptor family. In terms of assembly, homotrimer. Forms heterotrimer with P2RX2. Heterotrimeric P2RX2/3 has a ligand dose-response profile that is distinct from either homotrimeric P2RX2 or P2RX3.

Its subcellular location is the cell membrane. The catalysed reaction is Ca(2+)(in) = Ca(2+)(out). It catalyses the reaction Na(+)(in) = Na(+)(out). Has high sensitivity to ATP. Fast activation by external ATP. Exhibits rapid desensitization. Sensitives to the ATP agonist:alpha/beta-methylene-ATP. Subject to allosteric inhibition by AF-219. Mg(2+) and Ca(2+) slow deactivation of P2RX3. Extracellular ATP-activated non-selective cation channel. Plays particularly important role in sensory neurons where its activation is critical for gustatory, nociceptive responses, visceral reflexes and sensory hypersensitization. The sequence is that of P2X purinoceptor 3 (P2RX3) from Homo sapiens (Human).